Consider the following 395-residue polypeptide: MEKISDLIECIAYEKNLPKEMISKVIQGCLLKMAQNELDPLARYLVVEENKQLQLIQLVEVLEDDDERLVNDPSKYISLSKAKEMDPSVKIKDELSYSLSLESMKQGAINRLFKDLQYQLEKALEDSHFEAFQKRLNSVLMGQVILVDHNQNTFIEIEQQFQGVLSMRHRIKGESFKIGDSIKAVLTQVKRTKKGLLLELSRTTPKMLEALLELEVPEIKDKEIEIIHCARIPGNRAKVSFFSHNSRIDPIGAAVGVKGVRINAISNELNKENIDCIEYSNVPEIYITLALAPAKILSVEIKKIPIEELSAEEKESIQERFIVNNHLQKAKVRLLDIEKSKAIGKGGVNVCLASMLTGYHIEFETIPSVKENAENENEKETPKVGVEALESLFKN.

The S1 motif domain maps to 137–201; it reads NSVLMGQVIL…TKKGLLLELS (65 aa). KH domains follow at residues 243 to 291 and 331 to 378; these read SHNS…TLAL and KVRL…NENE.

This sequence belongs to the NusA family. Monomer. Binds directly to the core enzyme of the DNA-dependent RNA polymerase and to nascent RNA.

The protein localises to the cytoplasm. Its function is as follows. Participates in both transcription termination and antitermination. This is Transcription termination/antitermination protein NusA from Helicobacter pylori (strain J99 / ATCC 700824) (Campylobacter pylori J99).